We begin with the raw amino-acid sequence, 288 residues long: 33 kDa chaperonin (288 aa).

2 disulfide bridges follow: Cys233-Cys235 and Cys267-Cys270.

It belongs to the HSP33 family. Under oxidizing conditions two disulfide bonds are formed involving the reactive cysteines. Under reducing conditions zinc is bound to the reactive cysteines and the protein is inactive.

The protein localises to the cytoplasm. In terms of biological role, redox regulated molecular chaperone. Protects both thermally unfolding and oxidatively damaged proteins from irreversible aggregation. Plays an important role in the bacterial defense system toward oxidative stress. This Pasteurella multocida (strain Pm70) protein is 33 kDa chaperonin.